Consider the following 205-residue polypeptide: Isochorismatase domain-containing protein 2 (205 aa).

Phosphoserine occurs at positions 7 and 202.

Belongs to the isochorismatase family. Interacts with CDKN2A.

It is found in the cytoplasm. It localises to the nucleus. This is Isochorismatase domain-containing protein 2 (ISOC2) from Pongo abelii (Sumatran orangutan).